We begin with the raw amino-acid sequence, 492 residues long: Heat shock factor protein 4 (492 aa).

Residues 17-121 (VPAFLGKLWA…QLLERVRRKV (105 aa)) mediate DNA binding. The hydrophobic repeat HR-A/B stretch occupies residues 129–203 (GRWRPEDLGR…GPLQTGSSGA (75 aa)). An interactions with DUSP26, MAPK1 and MAPK2 region spans residues 245–323 (LPETTLGLSS…ECDFCVTAPP (79 aa)). The segment at 250 to 286 (LGLSSSHRTRGPIISDIHEDSPSPDGTRLSPSSGGRR) is disordered. A Glycyl lysine isopeptide (Lys-Gly) (interchain with G-Cter in SUMO) cross-link involves residue Lys294. Ser299 carries the post-translational modification Phosphoserine. Residues 337–378 (KGNFSPEGPRNAQQPEPRGPREVPDRGTLGLDRGARSPENLL) are disordered. The interval 365 to 390 (LGLDRGARSPENLLPPMLLRAPPESV) is hydrophobic repeat HR-C.

This sequence belongs to the HSF family. Homotrimer. Exhibits constitutive DNA binding and forms trimers even in the absence of stress. Interacts with ALKBH4, DUSP26, MAPK1, MAPK2, MAPK8 and MAP kinase p38. In terms of processing, phosphorylated mainly on serine residues. Phosphorylation on Ser-299 promotes sumoylation on Lys-294. Post-translationally, constitutively sumoylated. Sumoylation represses the transcriptional activity and is promoted by phosphorylation on Ser-299.

The protein localises to the nucleus. Heat-shock transcription factor that specifically binds heat shock promoter elements (HSE). Required for denucleation and organelle rupture and degradation that occur during eye lens terminal differentiation, when fiber cells that compose the lens degrade all membrane-bound organelles in order to provide lens with transparency to allow the passage of light. In this process, may regulate denucleation of lens fiber cells in part by activating DNASE2B transcription. May be involved in DNA repair through the transcriptional regulation of RAD51. May up-regulate p53/TP53 protein in eye lens fiber cells, possibly through protein stabilization. In the eye lens, controls the expression of alpha-crystallin B chain/CRYAB and consequently may be involved in the regulation of lysosomal acidification. The chain is Heat shock factor protein 4 (HSF4) from Canis lupus familiaris (Dog).